The chain runs to 308 residues: Putative S-adenosyl-L-methionine-dependent methyltransferase Mb3816c (308 aa).

Residues Asp131 and 160-161 (DL) contribute to the S-adenosyl-L-methionine site.

The protein belongs to the UPF0677 family.

Its function is as follows. Exhibits S-adenosyl-L-methionine-dependent methyltransferase activity. The chain is Putative S-adenosyl-L-methionine-dependent methyltransferase Mb3816c from Mycobacterium bovis (strain ATCC BAA-935 / AF2122/97).